Reading from the N-terminus, the 193-residue chain is Acyl carrier protein phosphodiesterase (193 aa).

It belongs to the AcpH family.

The enzyme catalyses holo-[ACP] + H2O = apo-[ACP] + (R)-4'-phosphopantetheine + H(+). In terms of biological role, converts holo-ACP to apo-ACP by hydrolytic cleavage of the phosphopantetheine prosthetic group from ACP. The protein is Acyl carrier protein phosphodiesterase of Salmonella newport (strain SL254).